Reading from the N-terminus, the 137-residue chain is Large-conductance mechanosensitive channel (137 aa).

The next 2 helical transmembrane spans lie at 10-30 (FAMR…AAFG) and 76-96 (GTFI…FSAV).

Belongs to the MscL family. In terms of assembly, homopentamer.

It localises to the cell inner membrane. Functionally, channel that opens in response to stretch forces in the membrane lipid bilayer. May participate in the regulation of osmotic pressure changes within the cell. This is Large-conductance mechanosensitive channel from Yersinia pseudotuberculosis serotype O:1b (strain IP 31758).